The sequence spans 447 residues: Na(+)-translocating NADH-quinone reductase subunit A (447 aa).

This sequence belongs to the NqrA family. Composed of six subunits; NqrA, NqrB, NqrC, NqrD, NqrE and NqrF.

The enzyme catalyses a ubiquinone + n Na(+)(in) + NADH + H(+) = a ubiquinol + n Na(+)(out) + NAD(+). Functionally, NQR complex catalyzes the reduction of ubiquinone-1 to ubiquinol by two successive reactions, coupled with the transport of Na(+) ions from the cytoplasm to the periplasm. NqrA to NqrE are probably involved in the second step, the conversion of ubisemiquinone to ubiquinol. The protein is Na(+)-translocating NADH-quinone reductase subunit A of Haemophilus influenzae (strain 86-028NP).